The primary structure comprises 323 residues: Acetyl-coenzyme A carboxylase carboxyl transferase subunit alpha (323 aa).

The CoA carboxyltransferase C-terminal domain maps to 35 to 296 (EVLSELDELR…GMTLKKCLDE (262 aa)).

This sequence belongs to the AccA family. In terms of assembly, acetyl-CoA carboxylase is a heterohexamer composed of biotin carboxyl carrier protein (AccB), biotin carboxylase (AccC) and two subunits each of ACCase subunit alpha (AccA) and ACCase subunit beta (AccD).

Its subcellular location is the cytoplasm. The catalysed reaction is N(6)-carboxybiotinyl-L-lysyl-[protein] + acetyl-CoA = N(6)-biotinyl-L-lysyl-[protein] + malonyl-CoA. The protein operates within lipid metabolism; malonyl-CoA biosynthesis; malonyl-CoA from acetyl-CoA: step 1/1. In terms of biological role, component of the acetyl coenzyme A carboxylase (ACC) complex. First, biotin carboxylase catalyzes the carboxylation of biotin on its carrier protein (BCCP) and then the CO(2) group is transferred by the carboxyltransferase to acetyl-CoA to form malonyl-CoA. The chain is Acetyl-coenzyme A carboxylase carboxyl transferase subunit alpha from Aquifex aeolicus (strain VF5).